The sequence spans 123 residues: Large ribosomal subunit protein bL12 (123 aa).

This sequence belongs to the bacterial ribosomal protein bL12 family. As to quaternary structure, homodimer. Part of the ribosomal stalk of the 50S ribosomal subunit. Forms a multimeric L10(L12)X complex, where L10 forms an elongated spine to which 2 to 4 L12 dimers bind in a sequential fashion. Binds GTP-bound translation factors.

Functionally, forms part of the ribosomal stalk which helps the ribosome interact with GTP-bound translation factors. Is thus essential for accurate translation. This chain is Large ribosomal subunit protein bL12, found in Chlorobium phaeovibrioides (strain DSM 265 / 1930) (Prosthecochloris vibrioformis (strain DSM 265)).